We begin with the raw amino-acid sequence, 250 residues long: Electron transfer flavoprotein subunit beta (250 aa).

The protein belongs to the ETF beta-subunit/FixA family. As to quaternary structure, heterodimer of an alpha and a beta subunit. The cofactor is FAD. It depends on AMP as a cofactor.

It localises to the mitochondrion matrix. Its function is as follows. The electron transfer flavoprotein serves as a specific electron acceptor for several dehydrogenases, including five acyl-CoA dehydrogenases, glutaryl-CoA and sarcosine dehydrogenase. It transfers the electrons to the main mitochondrial respiratory chain via ETF-ubiquinone oxidoreductase (ETF dehydrogenase). The chain is Electron transfer flavoprotein subunit beta (etfb) from Dictyostelium discoideum (Social amoeba).